An 83-amino-acid chain; its full sequence is Small ribosomal subunit protein eS21 (83 aa).

The protein belongs to the eukaryotic ribosomal protein eS21 family. As to quaternary structure, component of the 40S small ribosomal subunit.

It is found in the cytoplasm. It localises to the cytosol. The protein resides in the rough endoplasmic reticulum. In Biphyllus lunatus (Beetle), this protein is Small ribosomal subunit protein eS21 (RpS21).